Here is a 391-residue protein sequence, read N- to C-terminus: 3-ketoacyl-CoA thiolase, peroxisomal (391 aa).

The active-site Acyl-thioester intermediate is the Cys-92. Catalysis depends on proton acceptor residues His-335 and Cys-366.

It belongs to the thiolase-like superfamily. Thiolase family. In terms of assembly, homodimer.

It localises to the peroxisome. It carries out the reaction an acyl-CoA + acetyl-CoA = a 3-oxoacyl-CoA + CoA. It functions in the pathway lipid metabolism; fatty acid metabolism. This is 3-ketoacyl-CoA thiolase, peroxisomal (FOX3) from Encephalitozoon cuniculi (strain GB-M1) (Microsporidian parasite).